We begin with the raw amino-acid sequence, 308 residues long: uncharacterized protein (308 aa).

7 helical membrane passes run 10–30 (IILL…TNLI), 91–111 (LPTI…VVIL), 115–135 (LGLI…LIGI), 178–198 (VIPM…LGLM), 219–239 (ITVL…VDIL), 251–271 (LIVL…KHSI), and 288–308 (INYT…IAFF).

To M.jannaschii MJ0871, MJ1556 and MJ1589.

It localises to the cell membrane. This is an uncharacterized protein from Methanocaldococcus jannaschii (strain ATCC 43067 / DSM 2661 / JAL-1 / JCM 10045 / NBRC 100440) (Methanococcus jannaschii).